A 434-amino-acid polypeptide reads, in one-letter code: Enolase A (434 aa).

2 residues coordinate substrate: His160 and Glu169. Glu212 acts as the Proton donor in catalysis. Mg(2+) is bound by residues Asp247, Glu296, and Asp321. Glu296 and Asp321 together coordinate substrate. Lys346 serves as the catalytic Proton acceptor. Substrate-binding positions include 373-376 (SHRS) and Lys397.

It belongs to the enolase family. Homodimer. The cofactor is Mg(2+).

It localises to the cytoplasm. It carries out the reaction (2R)-2-phosphoglycerate = phosphoenolpyruvate + H2O. It participates in carbohydrate degradation; glycolysis; pyruvate from D-glyceraldehyde 3-phosphate: step 4/5. This is Enolase A (enoA) from Dictyostelium discoideum (Social amoeba).